The sequence spans 307 residues: S-methyl-5'-thioadenosine phosphorylase (307 aa).

Phosphate is bound by residues serine 16, 59–60 (RH), and 92–93 (SA). Methionine 198 lines the substrate pocket. Serine 199 provides a ligand contact to phosphate. Substrate is bound at residue 222 to 224 (DYD).

This sequence belongs to the PNP/MTAP phosphorylase family. MTAP subfamily. As to quaternary structure, homotrimer.

It localises to the cytoplasm. The protein resides in the nucleus. It catalyses the reaction S-methyl-5'-thioadenosine + phosphate = 5-(methylsulfanyl)-alpha-D-ribose 1-phosphate + adenine. Its pathway is amino-acid biosynthesis; L-methionine biosynthesis via salvage pathway; S-methyl-5-thio-alpha-D-ribose 1-phosphate from S-methyl-5'-thioadenosine (phosphorylase route): step 1/1. Its function is as follows. Catalyzes the reversible phosphorylation of S-methyl-5'-thioadenosine (MTA) to adenine and 5-methylthioribose-1-phosphate. Involved in the breakdown of MTA, a major by-product of polyamine biosynthesis. Responsible for the first step in the methionine salvage pathway after MTA has been generated from S-adenosylmethionine. Has broad substrate specificity with 6-aminopurine nucleosides as preferred substrates. This Schizosaccharomyces pombe (strain 972 / ATCC 24843) (Fission yeast) protein is S-methyl-5'-thioadenosine phosphorylase.